A 256-amino-acid polypeptide reads, in one-letter code: Rano class II histocompatibility antigen, B alpha chain (256 aa).

Positions 1–23 are cleaved as a signal peptide; that stretch reads MPLSRALILGVLALTTMLSPCGG. The alpha-1 stretch occupies residues 24-111; that stretch reads QDDIEADHVG…KRSNSTPAVN (88 aa). The Extracellular segment spans residues 24 to 218; it reads QDDIEADHVG…IPAPMSELTE (195 aa). Residues 108–206 enclose the Ig-like C1-type domain; that stretch reads PAVNEVPEAT…LDEPVLRHWE (99 aa). Residues 112-205 are alpha-2; the sequence is EVPEATVFSK…SLDEPVLRHW (94 aa). Cysteine 134 and cysteine 190 are oxidised to a cystine. Asparagine 145 carries N-linked (GlcNAc...) asparagine glycosylation. Residues 206–218 form a connecting peptide region; it reads EPEIPAPMSELTE. A helical transmembrane segment spans residues 219-244; it reads TVVCALGLSVGLVGIVVGTIFIIQGL. At 245-256 the chain is on the cytoplasmic side; the sequence is RSVAPSRHPGPL.

Belongs to the MHC class II family.

Its subcellular location is the membrane. This is Rano class II histocompatibility antigen, B alpha chain (RT1-Ba) from Rattus norvegicus (Rat).